The chain runs to 381 residues: Phospholipid scramblase family protein C343.06c (381 aa).

The disordered stretch occupies residues 336–369 (QEILKNDQETTPSTNDSSSETKSPFLSDADLDQQ). Residues 344-359 (ETTPSTNDSSSETKSP) are compositionally biased toward polar residues.

This sequence belongs to the phospholipid scramblase family.

Its subcellular location is the mitochondrion. The protein is Phospholipid scramblase family protein C343.06c of Schizosaccharomyces pombe (strain 972 / ATCC 24843) (Fission yeast).